Reading from the N-terminus, the 1740-residue chain is MDGPGASAVVVRVGIPDLQQTKCLRLDPTAPVWAAKQRVLCALNHSLQDALNYGLFQPPSRGRAGKFLDEERLLQDYPPNLDTPLPYLEFRYKRRVYAQNLIDDKQFAKLHTKANLKKFMDYVQLHSTDKVARLLDKGLDPNFHDPDSGECPLSLAAQLDNATDLLKVLRNGGAHLDFRTRDGLTAVHCATRQRNAGALTTLLDLGASPDYKDSRGLTPLYHSALGGGDALCCELLLHDHAQLGTTDENGWQEIHQACRFGHVQHLEHLLFYGANMGAQNASGNTALHICALYNQESCARVLLFRGANKDVRNYNSQTAFQVAIIAGNFELAEVIKTHKDSDVVPFRETPSYAKRRRLAGPSGLASPRPLQRSASDINLKGDQPAASPGPTLRSLPHQLLLQRLQEEKDRDRDGEQENDISGPSAGRGGHSKISPSGPGGSGPAPGPGPASPAPPAPPPRGPKRKLYSAVPGRKFIAVKAHSPQGEGEIPLHRGEAVKVLSIGEGGFWEGTVKGRTGWFPADCVEEVQMRQYDTRHETREDRTKRLFRHYTVGSYDSLTSHSDYVIDDKVAILQKRDHEGFGFVLRGAKAETPIEEFTPTPAFPALQYLESVDVEGVAWKAGLRTGDFLIEVNGVNVVKVGHKQVVGLIRQGGNRLVMKVVSVTRKPEEDSARRRAPPPPKRAPSTTLTLRSKSMTAELEELASIRRRKGEKLDEILAVAAEPTLRPDIADADSRAATVKQRPTSRRITPAEISSLFERQGLPGPEKLPGSLRKGIPRTKSVGEDEKLASLLEGRFPRSTSMQDTVREGRGIPPPPQTAPPPPPAPYYFDSGPPPTFSPPPPPPGRAYDTVRSSFKPGLEARLGAGAAGLYDSGTPLGPLPYPERQKRARSMIILQDSAPEVGDVPRPAPAATPPERPKRRPRPSGPDSPYANLGAFSASLFAPSKPQRRKSPLVKQLQVEDAQERAALAVGSPGPVGGSFAREPSPTHRGPRPGGLDYSSGEGLGLTFGGPSPGPVKERRLEERRRSTVFLSVGAIEGSPPSADLPSLQPSRSIDERLLGTGATTGRDLLLPSPVSALKPLVGGPSLGPSGSTFIHPLTGKPLDPSSPLALALAARERALASQTPSRSPTPVHSPDADRPGPLFVDVQTRDSERGPLASPAFSPRSPAWIPVPARREAEKPTREERKSPEDKKSMILSVLDTSLQRPAGLIVVHATSNGQEPNRLGAEEERPGTPELAPTPMQAAAVAEPMPSPRAQPPGSIPADPGPGQGSSEEEPELVFAVNLPPAQLSSSDEETREELARIGLVPPPEEFANGILLATPPPGPGPLPTTVPSPASGKPSSELPPAPESAADSGVEEADTRSSSDPHLETTSTISTVSSMSTLSSESGELTDTHTSFADGHTFLLEKPPVPPKPKLKSPLGKGPVTFRDPLLKQSSDSELMAQQHHATSTGLTSAAGPARPRYLFQRRSKLWGDPVESRGLPGPEDDKPTVISELSSRLQQLNKDTRSLGEEPVGGLGSLLDPAKKSPIAAARCAVVPSAGWLFSSLGELSTISAQRSPGGPGGGASYSVRPSGRYPVARRAPSPVKPASLERVEGLGAGVGGAGRPFGLTPPTILKSSSLSIPHEPKEVRFVVRSVSARSRSPSPSPLPSPSPGSGPSAGPRRPFQQKPLQLWSKFDVGDWLESIHLGEHRDRFEDHEIEGAHLPALTKEDFVELGVTRVGHRMNIERALRQLDGS.

Residues 1 to 75 are intramolecular interaction with the ANK repeats; sequence MDGPGASAVV…KFLDEERLLQ (75 aa). Y122 is modified (phosphotyrosine). 6 ANK repeats span residues 148–181, 182–214, 215–245, 249–278, 282–311, and 315–345; these read SGEC…FRTR, DGLT…YKDS, RGLT…QLGT, NGWQ…NMGA, SGNT…NKDV, and NSQT…DVVP. Residues 354–466 are disordered; sequence KRRRLAGPSG…PPPRGPKRKL (113 aa). Phosphoserine is present on residues S373, S375, S387, and S394. Over residues 404 to 415 the composition is skewed to basic and acidic residues; sequence LQEEKDRDRDGE. Pro residues predominate over residues 444–460; sequence APGPGPASPAPPAPPPR. Positions 470–529 constitute an SH3 domain; sequence VPGRKFIAVKAHSPQGEGEIPLHRGEAVKVLSIGEGGFWEGTVKGRTGWFPADCVEEVQM. A Phosphoserine modification is found at S482. A Phosphotyrosine modification is found at Y555. A PDZ domain is found at 570 to 664; that stretch reads VAILQKRDHE…RLVMKVVSVT (95 aa). The interval 664 to 687 is disordered; sequence TRKPEEDSARRRAPPPPKRAPSTT. The segment at 677–684 is required for interaction with ABI1; that stretch reads PPPPKRAP. Phosphoserine is present on residues S694, S781, S790, and S801. Disordered regions lie at residues 759-855, 868-1053, 1115-1199, 1211-1463, and 1476-1518; these read RQGL…RSSF, AGLY…QPSR, AARE…MILS, LIVV…GPAR, and GDPV…EPVG. Over residues 812–845 the composition is skewed to pro residues; that stretch reads IPPPPQTAPPPPPAPYYFDSGPPPTFSPPPPPPG. Residues S891 and S898 each carry the phosphoserine modification. T913 is modified (phosphothreonine). Y931 carries the phosphotyrosine modification. Position 966 is an asymmetric dimethylarginine (R966). Basic and acidic residues predominate over residues 1017-1027; sequence VKERRLEERRR. A compositionally biased stretch (polar residues) spans 1123-1132; the sequence is SQTPSRSPTP. At T1131 the chain carries Phosphothreonine. S1135, S1160, S1164, and S1167 each carry phosphoserine. A compositionally biased stretch (basic and acidic residues) spans 1175–1195; the sequence is ARREAEKPTREERKSPEDKKS. T1235 is subject to Phosphothreonine. 2 stretches are compositionally biased toward pro residues: residues 1252 to 1262 and 1322 to 1334; these read MPSPRAQPPGS and TPPP…PTTV. S1254 bears the Phosphoserine mark. The segment covering 1335–1344 has biased composition (low complexity); that stretch reads PSPASGKPSS. Basic and acidic residues predominate over residues 1361–1371; that stretch reads ADTRSSSDPHL. Low complexity predominate over residues 1372 to 1393; it reads ETTSTISTVSSMSTLSSESGEL. An SH3-binding motif is present at residues 1411–1417; that stretch reads PPVPPKP. A Phosphoserine modification is found at S1421. Residues 1495 to 1515 adopt a coiled-coil conformation; sequence ISELSSRLQQLNKDTRSLGEE. Polar residues predominate over residues 1496–1506; sequence SELSSRLQQLN. A phosphoserine mark is found at S1511, S1522, S1530, and S1549. Disordered stretches follow at residues 1556-1594 and 1637-1673; these read ISAQ…PASL and VRSV…QQKP. Low complexity predominate over residues 1637–1647; that stretch reads VRSVSARSRSP. A phosphoserine mark is found at S1644, S1646, and S1648. Over residues 1648–1658 the composition is skewed to pro residues; it reads SPSPLPSPSPG. The segment covering 1659–1668 has biased composition (low complexity); the sequence is SGPSAGPRRP. The 64-residue stretch at 1677–1740 folds into the SAM domain; sequence WSKFDVGDWL…ERALRQLDGS (64 aa).

This sequence belongs to the SHANK family. As to quaternary structure, may homomultimerize via its SAM domain. Interacts with BAIAP2, DBNL and SLC17A7/VGLUT1. Interacts with DLGAP1/GKAP, GRM1/MGLUR1, GRM5/MGLUR5 and LZTS3 C-termini via its PDZ domain. Interacts with ABI1, HOMER1, HOMER2, HOMER3 and CTTN/cortactin SH3 domain. Is part of a complex with DLG4/PSD-95 and DLGAP1/GKAP. Interacts (via PDZ domain) with the GRIA1 subunit of the AMPA receptor (via PDZ-binding motif). Interacts with WASF1 and CYFIP2; the interactions mediate the association of SHANK3 with the WAVE1 complex. Interacts with ARPC2; the interaction probably mediates the association of SHANK3 with the Arp2/3 complex. Interacts (via ANK repeats) with SHARPIN and SPTAN1. Interacts (via PDZ domain) with ARHGAP44 (probably via PDZ-binding motif); the interaction takes place in dendritic spines and promotes GRIA1 exocytosis. Interacts with CAMK2A. Interacts with DIP2A. Interacts with ADGRL3. As to expression, widely expressed in brain (at protein level).

The protein localises to the cytoplasm. It localises to the postsynaptic density. Its subcellular location is the cell projection. It is found in the dendritic spine. Its function is as follows. Major scaffold postsynaptic density protein which interacts with multiple proteins and complexes to orchestrate the dendritic spine and synapse formation, maturation and maintenance. Interconnects receptors of the postsynaptic membrane including NMDA-type and metabotropic glutamate receptors via complexes with GKAP/PSD-95 and HOMER, respectively, and the actin-based cytoskeleton. Plays a role in the structural and functional organization of the dendritic spine and synaptic junction through the interaction with Arp2/3 and WAVE1 complex as well as the promotion of the F-actin clusters. By way of this control of actin dynamics, participates in the regulation of developing neurons growth cone motility and the NMDA receptor-signaling. Also modulates GRIA1 exocytosis and GRM5/MGLUR5 expression and signaling to control the AMPA and metabotropic glutamate receptor-mediated synaptic transmission and plasticity. May be required at an early stage of synapse formation and be inhibited by IGF1 to promote synapse maturation. This is SH3 and multiple ankyrin repeat domains protein 3 (Shank3) from Rattus norvegicus (Rat).